The sequence spans 156 residues: Protein-export protein SecB (156 aa).

Belongs to the SecB family. In terms of assembly, homotetramer, a dimer of dimers. One homotetramer interacts with 1 SecA dimer.

The protein localises to the cytoplasm. In terms of biological role, one of the proteins required for the normal export of preproteins out of the cell cytoplasm. It is a molecular chaperone that binds to a subset of precursor proteins, maintaining them in a translocation-competent state. It also specifically binds to its receptor SecA. This chain is Protein-export protein SecB, found in Serratia proteamaculans (strain 568).